The chain runs to 101 residues: Venom peptide Pc (101 aa).

The signal sequence occupies residues 1 to 20 (MSHLRIAVIFLCTLFALTAG).

This sequence belongs to the scorpion La1-like peptide family. In terms of processing, contains 4 disulfide bonds. As to expression, expressed by the venom gland.

It localises to the secreted. This is Venom peptide Pc from Pandinus cavimanus (Tanzanian red clawed scorpion).